The chain runs to 199 residues: Pyridoxal 5'-phosphate synthase subunit PdxT (199 aa).

An L-glutamine-binding site is contributed by 47 to 49; it reads GES. Catalysis depends on Cys79, which acts as the Nucleophile. L-glutamine-binding positions include Arg106 and 133–134; that span reads IR. Active-site charge relay system residues include His169 and Glu171.

Belongs to the glutaminase PdxT/SNO family. In the presence of PdxS, forms a dodecamer of heterodimers. Only shows activity in the heterodimer.

It catalyses the reaction aldehydo-D-ribose 5-phosphate + D-glyceraldehyde 3-phosphate + L-glutamine = pyridoxal 5'-phosphate + L-glutamate + phosphate + 3 H2O + H(+). It carries out the reaction L-glutamine + H2O = L-glutamate + NH4(+). Its pathway is cofactor biosynthesis; pyridoxal 5'-phosphate biosynthesis. Functionally, catalyzes the hydrolysis of glutamine to glutamate and ammonia as part of the biosynthesis of pyridoxal 5'-phosphate. The resulting ammonia molecule is channeled to the active site of PdxS. The chain is Pyridoxal 5'-phosphate synthase subunit PdxT from Desulfitobacterium hafniense (strain Y51).